The primary structure comprises 569 residues: Falcipain-1 (569 aa).

Topologically, residues 1 to 35 are cytoplasmic; that stretch reads MVAIKEMKEFAFARPSLVETLNKKKKFLKKKEKRT. The propeptide at 1–332 is activation peptide; sequence MVAIKEMKEF…KRNEKDIFSK (332 aa). The helical; Signal-anchor for type II membrane protein transmembrane segment at 36–56 threads the bilayer; the sequence is FVLSIYAFITFIIFCIGILYF. At 57–569 the chain is on the lumenal side; it reads TNKSSAHNNN…IGEEVFYPIL (513 aa). N-linked (GlcNAc...) asparagine glycosylation is found at Asn-58, Asn-98, Asn-121, and Asn-127. The segment at 97-118 is disordered; that stretch reads LNESSNEEDEEKYTLNSETYNN. Cystine bridges form between Cys-354–Cys-395, Cys-388–Cys-428, and Cys-413–Cys-433. Cys-357 is an active-site residue. N-linked (GlcNAc...) asparagine glycans are attached at residues Asn-479 and Asn-487. The cysteines at positions 482 and 558 are disulfide-linked. Catalysis depends on residues His-488 and Asn-533.

The protein belongs to the peptidase C1 family. Contains disulfide bonds.

Its subcellular location is the membrane. The protein resides in the cytoplasmic granule. Its function is as follows. Cysteine protease. In the mosquito midgut, required for parasite development. The chain is Falcipain-1 from Plasmodium falciparum (isolate 3D7).